Consider the following 89-residue polypeptide: Small ribosomal subunit protein bS18 (89 aa).

The protein belongs to the bacterial ribosomal protein bS18 family. Part of the 30S ribosomal subunit. Forms a tight heterodimer with protein bS6.

In terms of biological role, binds as a heterodimer with protein bS6 to the central domain of the 16S rRNA, where it helps stabilize the platform of the 30S subunit. In Bdellovibrio bacteriovorus (strain ATCC 15356 / DSM 50701 / NCIMB 9529 / HD100), this protein is Small ribosomal subunit protein bS18.